The primary structure comprises 95 residues: Small ribosomal subunit protein uS19 (95 aa).

Residues 73–95 (EFSPTRSYRGHGADKNAKGSKKK) are disordered.

It belongs to the universal ribosomal protein uS19 family.

Its function is as follows. Protein S19 forms a complex with S13 that binds strongly to the 16S ribosomal RNA. This Deinococcus deserti (strain DSM 17065 / CIP 109153 / LMG 22923 / VCD115) protein is Small ribosomal subunit protein uS19.